The following is a 219-amino-acid chain: Peptide methionine sulfoxide reductase MsrA (219 aa).

The active site involves C58.

The protein belongs to the MsrA Met sulfoxide reductase family.

It carries out the reaction L-methionyl-[protein] + [thioredoxin]-disulfide + H2O = L-methionyl-(S)-S-oxide-[protein] + [thioredoxin]-dithiol. The catalysed reaction is [thioredoxin]-disulfide + L-methionine + H2O = L-methionine (S)-S-oxide + [thioredoxin]-dithiol. In terms of biological role, has an important function as a repair enzyme for proteins that have been inactivated by oxidation. Catalyzes the reversible oxidation-reduction of methionine sulfoxide in proteins to methionine. This is Peptide methionine sulfoxide reductase MsrA from Ectopseudomonas mendocina (strain ymp) (Pseudomonas mendocina).